The sequence spans 464 residues: ATP synthase subunit beta (464 aa).

152 to 159 (GGAGVGKT) lines the ATP pocket.

The protein belongs to the ATPase alpha/beta chains family. In terms of assembly, F-type ATPases have 2 components, CF(1) - the catalytic core - and CF(0) - the membrane proton channel. CF(1) has five subunits: alpha(3), beta(3), gamma(1), delta(1), epsilon(1). CF(0) has three main subunits: a(1), b(2) and c(9-12). The alpha and beta chains form an alternating ring which encloses part of the gamma chain. CF(1) is attached to CF(0) by a central stalk formed by the gamma and epsilon chains, while a peripheral stalk is formed by the delta and b chains.

It localises to the cell membrane. It catalyses the reaction ATP + H2O + 4 H(+)(in) = ADP + phosphate + 5 H(+)(out). Functionally, produces ATP from ADP in the presence of a proton gradient across the membrane. The catalytic sites are hosted primarily by the beta subunits. The protein is ATP synthase subunit beta of Ureaplasma parvum serovar 3 (strain ATCC 27815 / 27 / NCTC 11736).